We begin with the raw amino-acid sequence, 907 residues long: Clumping factor B (907 aa).

A signal peptide spans 1 to 44 (MKKRIDYLSNKQNKYSIRRFTVGTTSVIVGATILFGIGNHQAQA). The YSIRK-G/S signaling motif motif lies at 15-26 (YSIRRFTVGTTS). Composition is skewed to polar residues over residues 44-61 (ASEQ…NASA) and 68-101 (MIET…KPMS). The segment at 44 to 191 (ASEQSNDTTQ…AQGTSKPSVR (148 aa)) is disordered. The tract at residues 45–542 (SEQSNDTTQS…GSADGDSAVN (498 aa)) is ligand binding A region. Residues 102–119 (TQTSNTTTTEPASTNETP) show a composition bias toward low complexity. The segment covering 134–189 (QDQTVPQEANSQVDNKTTNDANSIATNSELKNPQTLDLPQSSPQTISNAQGTSKPS) has biased composition (polar residues). The MIDAS-like motif signature appears at 272-276 (DYSNS). The disordered stretch occupies residues 530–879 (YGGGSADGDS…ETGDKSENTN (350 aa)). Pro residues predominate over residues 545-555 (DPTPGPPVDPE). Positions 556–831 (PSPDPEPEPS…SDSDSDSDSD (276 aa)) are enriched in acidic residues. The segment covering 835–846 (RVTPPNNEQKAP) has biased composition (polar residues). The segment covering 863–876 (HKTDALPETGDKSE) has biased composition (basic and acidic residues). The LPXTG sorting signal motif lies at 868–872 (LPETG). A Pentaglycyl murein peptidoglycan amidated threonine modification is found at Thr-871. Positions 872–907 (GDKSENTNATLFGAMMALLGSLLLFRKRKQDHKEKA) are cleaved as a propeptide — removed by sortase.

This sequence belongs to the serine-aspartate repeat-containing protein (SDr) family. In terms of processing, proteolytically cleaved by aureolysin (aur). This cleavage leads to the inactivation of ClfB.

The protein localises to the secreted. It is found in the cell wall. Its function is as follows. Cell surface-associated protein implicated in virulence by promoting bacterial attachment to both alpha- and beta-chains of human fibrinogen and inducing the formation of bacterial clumps. The protein is Clumping factor B (clfB) of Staphylococcus aureus (strain MW2).